A 130-amino-acid chain; its full sequence is uncharacterized protein (130 aa).

The segment at 1–28 (MELAKERNGPHQKHHGQCQNHCTSPNTV) is disordered. The segment covering 17-28 (QCQNHCTSPNTV) has biased composition (polar residues).

This is an uncharacterized protein from Saccharomyces cerevisiae (strain ATCC 204508 / S288c) (Baker's yeast).